Here is a 443-residue protein sequence, read N- to C-terminus: 3-phosphoshikimate 1-carboxyvinyltransferase (443 aa).

The disordered stretch occupies residues 1 to 22 (MSHASRPTPLEARGSTPLTGRV). Positions 28, 29, and 33 each coordinate 3-phosphoshikimate. Residue lysine 28 participates in phosphoenolpyruvate binding. Glycine 101 and arginine 129 together coordinate phosphoenolpyruvate. 3-phosphoshikimate-binding residues include serine 174, glutamine 176, aspartate 326, and lysine 353. Glutamine 176 contributes to the phosphoenolpyruvate binding site. The active-site Proton acceptor is aspartate 326. Residues arginine 357 and arginine 400 each coordinate phosphoenolpyruvate.

This sequence belongs to the EPSP synthase family. Monomer.

It localises to the cytoplasm. It carries out the reaction 3-phosphoshikimate + phosphoenolpyruvate = 5-O-(1-carboxyvinyl)-3-phosphoshikimate + phosphate. Its pathway is metabolic intermediate biosynthesis; chorismate biosynthesis; chorismate from D-erythrose 4-phosphate and phosphoenolpyruvate: step 6/7. Its function is as follows. Catalyzes the transfer of the enolpyruvyl moiety of phosphoenolpyruvate (PEP) to the 5-hydroxyl of shikimate-3-phosphate (S3P) to produce enolpyruvyl shikimate-3-phosphate and inorganic phosphate. This is 3-phosphoshikimate 1-carboxyvinyltransferase from Afipia carboxidovorans (strain ATCC 49405 / DSM 1227 / KCTC 32145 / OM5) (Oligotropha carboxidovorans).